Reading from the N-terminus, the 212-residue chain is Large ribosomal subunit protein uL3 (212 aa).

Residues 135 to 161 (MTHGNSLSHRAPGSIGQNQSPGKVFKG) are disordered. N5-methylglutamine is present on glutamine 153.

Belongs to the universal ribosomal protein uL3 family. As to quaternary structure, part of the 50S ribosomal subunit. Forms a cluster with proteins L14 and L19. Post-translationally, methylated by PrmB.

One of the primary rRNA binding proteins, it binds directly near the 3'-end of the 23S rRNA, where it nucleates assembly of the 50S subunit. This chain is Large ribosomal subunit protein uL3, found in Alteromonas mediterranea (strain DSM 17117 / CIP 110805 / LMG 28347 / Deep ecotype).